A 291-amino-acid chain; its full sequence is Aspartate carbamoyltransferase catalytic subunit (291 aa).

Carbamoyl phosphate is bound by residues Arg49 and Thr50. Lys77 lines the L-aspartate pocket. Arg99, His127, and Gln130 together coordinate carbamoyl phosphate. L-aspartate contacts are provided by Arg160 and Arg210. Positions 249 and 250 each coordinate carbamoyl phosphate.

The protein belongs to the aspartate/ornithine carbamoyltransferase superfamily. ATCase family. In terms of assembly, heterododecamer (2C3:3R2) of six catalytic PyrB chains organized as two trimers (C3), and six regulatory PyrI chains organized as three dimers (R2).

The enzyme catalyses carbamoyl phosphate + L-aspartate = N-carbamoyl-L-aspartate + phosphate + H(+). It participates in pyrimidine metabolism; UMP biosynthesis via de novo pathway; (S)-dihydroorotate from bicarbonate: step 2/3. In terms of biological role, catalyzes the condensation of carbamoyl phosphate and aspartate to form carbamoyl aspartate and inorganic phosphate, the committed step in the de novo pyrimidine nucleotide biosynthesis pathway. The chain is Aspartate carbamoyltransferase catalytic subunit from Sulfurimonas denitrificans (strain ATCC 33889 / DSM 1251) (Thiomicrospira denitrificans (strain ATCC 33889 / DSM 1251)).